The primary structure comprises 93 residues: U12-lycotoxin-Ls1d (93 aa).

A signal peptide spans M1–S18. A propeptide spanning residues E19 to R38 is cleaved from the precursor.

Belongs to the neurotoxin 31 family. Contains 5 disulfide bonds. In terms of tissue distribution, expressed by the venom gland.

The protein resides in the secreted. The polypeptide is U12-lycotoxin-Ls1d (Lycosa singoriensis (Wolf spider)).